The following is a 261-amino-acid chain: Small ribosomal subunit protein uS2 (261 aa).

The protein belongs to the universal ribosomal protein uS2 family.

The protein is Small ribosomal subunit protein uS2 of Thermodesulfovibrio yellowstonii (strain ATCC 51303 / DSM 11347 / YP87).